Here is a 318-residue protein sequence, read N- to C-terminus: Transaldolase (318 aa).

The active-site Schiff-base intermediate with substrate is the Lys-132.

The protein belongs to the transaldolase family. Type 1 subfamily. Homodimer.

Its subcellular location is the cytoplasm. It carries out the reaction D-sedoheptulose 7-phosphate + D-glyceraldehyde 3-phosphate = D-erythrose 4-phosphate + beta-D-fructose 6-phosphate. The protein operates within carbohydrate degradation; pentose phosphate pathway; D-glyceraldehyde 3-phosphate and beta-D-fructose 6-phosphate from D-ribose 5-phosphate and D-xylulose 5-phosphate (non-oxidative stage): step 2/3. In terms of biological role, transaldolase is important for the balance of metabolites in the pentose-phosphate pathway. The sequence is that of Transaldolase from Shewanella oneidensis (strain ATCC 700550 / JCM 31522 / CIP 106686 / LMG 19005 / NCIMB 14063 / MR-1).